Here is a 248-residue protein sequence, read N- to C-terminus: tRNA uridine(34) hydroxylase (248 aa).

The region spanning 127-221 is the Rhodanese domain; sequence RGRPLVLLDT…YFEEVGGEGY (95 aa). Residue C181 is the Cysteine persulfide intermediate of the active site.

Belongs to the TrhO family.

It carries out the reaction uridine(34) in tRNA + AH2 + O2 = 5-hydroxyuridine(34) in tRNA + A + H2O. Catalyzes oxygen-dependent 5-hydroxyuridine (ho5U) modification at position 34 in tRNAs. The polypeptide is tRNA uridine(34) hydroxylase (Xanthomonas euvesicatoria pv. vesicatoria (strain 85-10) (Xanthomonas campestris pv. vesicatoria)).